The sequence spans 761 residues: Mitochondrial inner membrane m-AAA protease component YTA10 (761 aa).

At 1–115 the chain is on the mitochondrial matrix side; the sequence is MMMWQRYARG…SLSEYFRSKE (115 aa). The interval 67 to 101 is disordered; it reads SWTRLNENRPNKEGEGKNNGNKDNNSNKEDGKDKR. Basic and acidic residues-rich tracts occupy residues 72 to 82 and 91 to 101; these read NENRPNKEGEG and NSNKEDGKDKR. The helical transmembrane segment at 116-136 threads the bilayer; that stretch reads FANTMFLTIGFTIIFTLLTPS. Residues 137–223 lie on the Mitochondrial intermembrane side of the membrane; sequence SNNSGDDSNR…IPIKYIERSS (87 aa). Residues 224-244 form a helical membrane-spanning segment; sequence PFTFLFPFLPTIILLGGLYFI. Topologically, residues 245–761 are mitochondrial matrix; sequence TRKINSSPPN…EPPEAPAATN (517 aa). Residues Val290, Ala291, Thr332, Gly333, Lys334, Thr335, Leu336, and His472 each coordinate ATP. His558 serves as a coordination point for Zn(2+). Glu559 is a catalytic residue. Zn(2+)-binding residues include His562 and Asp634.

In the N-terminal section; belongs to the AAA ATPase family. It in the C-terminal section; belongs to the peptidase M41 family. As to quaternary structure, component of the 850 kDa m-AAA protease complex, a heterohexamer composed of YTA12/RCA1 and YTA10/AFG3. Associates with the prohibitin complex, composed of PHB1 and PHB2, inhibiting the activity of the m-AAA protease complex. The cofactor is Zn(2+).

It localises to the mitochondrion inner membrane. It carries out the reaction ATP + H2O = ADP + phosphate + H(+). Its activity is regulated as follows. ATP hydrolysis is coordinated within m-AAA protease ring complexes: ATP-binding to YTA10/AFG3 inhibits ATP hydrolysis by the neighboring subunit YTA12/RCA1, leading to coordinated ATP hydrolysis within the AAA ATPase ring. Functionally, catalytic component of the m-AAA protease, a protease that plays a key role in proteostasis of inner mitochondrial membrane proteins. YTA10/AFG3 possesses both ATPase and protease activities: the ATPase activity is required to unfold substrates, threading them into the internal proteolytic cavity for hydrolysis into small peptide fragments. The complex is necessary for the assembly of mitochondrial respiratory chain and ATPase complexes. The m-AAA protease carries out protein quality control in the inner membrane of the mitochondria by mediating degradation of mistranslated or misfolded polypeptides. It also mediates protein maturation of the mitochondrial ribosomal subunit MRPL32/bL32m by catalyzing the cleavage of the presequence of MRPL32/bL32m prior to assembly into the mitochondrial ribosome. Promotes maturation of cytochrome c peroxidase (CCP1) by acting as a membrane protein dislocase via its ATPase activity: pulls the CCP1 transmembrane to the matrix prior to processing by the rhomboid protease PCP1. The membrane protein dislocase activity is also required to dislocate moderately hydrophobic transmembrane segments from the membrane. This Saccharomyces cerevisiae (strain ATCC 204508 / S288c) (Baker's yeast) protein is Mitochondrial inner membrane m-AAA protease component YTA10.